The primary structure comprises 227 residues: Orotidine 5'-phosphate decarboxylase (227 aa).

Residues aspartate 12, lysine 34, 61–70, threonine 117, arginine 178, glutamine 187, glycine 207, and arginine 208 contribute to the substrate site; that span reads DLKLHDIPNT. Catalysis depends on lysine 63, which acts as the Proton donor.

It belongs to the OMP decarboxylase family. Type 1 subfamily. Homodimer.

It catalyses the reaction orotidine 5'-phosphate + H(+) = UMP + CO2. The protein operates within pyrimidine metabolism; UMP biosynthesis via de novo pathway; UMP from orotate: step 2/2. In terms of biological role, catalyzes the decarboxylation of orotidine 5'-monophosphate (OMP) to uridine 5'-monophosphate (UMP). This is Orotidine 5'-phosphate decarboxylase from Anaeromyxobacter dehalogenans (strain 2CP-1 / ATCC BAA-258).